Consider the following 86-residue polypeptide: Progonadoliberin IIB (86 aa).

Residues 1 to 24 form the signal peptide; it reads MVHICRLFVVMGMLMFLSVQFASS. At glutamine 25 the chain carries Pyrrolidone carboxylic acid. A Glycine amide modification is found at glycine 34.

This sequence belongs to the GnRH family. Olfactory bulbs, hypothalamus and telencephalon, midbrain and posterior brain areas.

The protein localises to the secreted. Functionally, stimulates the secretion of gonadotropins. This is Progonadoliberin IIB (gnrh2b) from Carassius auratus (Goldfish).